Reading from the N-terminus, the 424-residue chain is Putative polyketide beta-ketoacyl synthase 2 (424 aa).

Residues serine 13–arginine 416 form the Ketosynthase family 3 (KS3) domain.

It belongs to the thiolase-like superfamily. Beta-ketoacyl-ACP synthases family.

Involved in developmentally regulated synthesis of a compound biosynthetically related to polyketide antibiotics which is essential for spore color in Streptomyces coelicolor. The protein is Putative polyketide beta-ketoacyl synthase 2 of Streptomyces coelicolor (strain ATCC BAA-471 / A3(2) / M145).